Here is a 129-residue protein sequence, read N- to C-terminus: D-ribose pyranase 1 (129 aa).

Histidine 20 functions as the Proton donor in the catalytic mechanism. Substrate contacts are provided by residues aspartate 28, histidine 96, and 118–120 (YSN).

This sequence belongs to the RbsD / FucU family. RbsD subfamily. In terms of assembly, homodecamer.

The protein localises to the cytoplasm. It catalyses the reaction beta-D-ribopyranose = beta-D-ribofuranose. It functions in the pathway carbohydrate metabolism; D-ribose degradation; D-ribose 5-phosphate from beta-D-ribopyranose: step 1/2. Catalyzes the interconversion of beta-pyran and beta-furan forms of D-ribose. This chain is D-ribose pyranase 1, found in Rubrobacter xylanophilus (strain DSM 9941 / JCM 11954 / NBRC 16129 / PRD-1).